We begin with the raw amino-acid sequence, 421 residues long: Probable indole-3-pyruvate monooxygenase YUCCA9 (421 aa).

Residue 29–34 coordinates FAD; sequence GAGPSG. 196–201 is a binding site for NADP(+); the sequence is GCGNSG.

This sequence belongs to the FMO family. FAD is required as a cofactor.

The catalysed reaction is indole-3-pyruvate + NADPH + O2 + H(+) = (indol-3-yl)acetate + CO2 + NADP(+) + H2O. The protein operates within plant hormone metabolism; auxin biosynthesis. Its function is as follows. Involved in auxin biosynthesis. Belongs to the set of redundant YUCCA genes probably responsible for auxin biosynthesis in roots. In Arabidopsis thaliana (Mouse-ear cress), this protein is Probable indole-3-pyruvate monooxygenase YUCCA9 (YUC9).